A 377-amino-acid chain; its full sequence is Chaperone protein DnaJ (377 aa).

The 66-residue stretch at 5 to 70 folds into the J domain; it reads DYYEVLGLQK…QKRAAYDQYG (66 aa). The CR-type zinc finger occupies 134-212; sequence GCKKDIRLST…CHGDGRVQKA (79 aa). 8 residues coordinate Zn(2+): Cys-147, Cys-150, Cys-164, Cys-167, Cys-186, Cys-189, Cys-200, and Cys-203. CXXCXGXG motif repeat units lie at residues 147–154, 164–171, 186–193, and 200–207; these read CDNCHGTG, CPHCHGAG, CPSCHGTG, and CHSCHGDG.

The protein belongs to the DnaJ family. In terms of assembly, homodimer. Zn(2+) is required as a cofactor.

The protein localises to the cytoplasm. Its function is as follows. Participates actively in the response to hyperosmotic and heat shock by preventing the aggregation of stress-denatured proteins and by disaggregating proteins, also in an autonomous, DnaK-independent fashion. Unfolded proteins bind initially to DnaJ; upon interaction with the DnaJ-bound protein, DnaK hydrolyzes its bound ATP, resulting in the formation of a stable complex. GrpE releases ADP from DnaK; ATP binding to DnaK triggers the release of the substrate protein, thus completing the reaction cycle. Several rounds of ATP-dependent interactions between DnaJ, DnaK and GrpE are required for fully efficient folding. Also involved, together with DnaK and GrpE, in the DNA replication of plasmids through activation of initiation proteins. In Haemophilus ducreyi (strain 35000HP / ATCC 700724), this protein is Chaperone protein DnaJ.